The sequence spans 548 residues: DNA ligase (548 aa).

Glu-196 is an ATP binding site. Lys-198 functions as the N6-AMP-lysine intermediate in the catalytic mechanism. Residues Arg-203, Arg-218, Glu-250, and Phe-284 each coordinate ATP. Position 250 (Glu-250) interacts with a divalent metal cation. Glu-345 lines the a divalent metal cation pocket. ATP is bound by residues Arg-361 and Lys-365. Residues 515–548 (EQLIRNSQENTKKTFARLATTYDGPSPNKKLKLN) form a disordered region.

It belongs to the ATP-dependent DNA ligase family. The cofactor is a divalent metal cation.

It catalyses the reaction ATP + (deoxyribonucleotide)n-3'-hydroxyl + 5'-phospho-(deoxyribonucleotide)m = (deoxyribonucleotide)n+m + AMP + diphosphate.. Its function is as follows. Able to ligate a double-stranded synthetic DNA substrate containing a single nick and inefficiently ligated a 1 nucleotide gap but did not ligate a 2 nucleotide gap. It is able to ligate short, complementary overhangs but not blunt-ended double-stranded DNA. May be implicated in DNA repair and recombination. In Lepidoptera (butterflies and moths), this protein is DNA ligase (LIG).